We begin with the raw amino-acid sequence, 342 residues long: RNA 3'-terminal phosphate cyclase (342 aa).

This sequence belongs to the RNA 3'-terminal cyclase family. Type 1 subfamily.

It localises to the cytoplasm. The catalysed reaction is a 3'-end 3'-phospho-ribonucleotide-RNA + GTP = a 3'-end 2',3'-cyclophospho-ribonucleotide-RNA + GMP + diphosphate. With respect to regulation, inhibited by GMP. In terms of biological role, catalyzes the GTP-dependent conversion of 3'-phosphate to a 2',3'-cyclic phosphodiester at the end of RNA. The biological role of this enzyme is unknown but it is likely to function in some aspects of cellular RNA processing. The chain is RNA 3'-terminal phosphate cyclase from Pyrococcus furiosus (strain ATCC 43587 / DSM 3638 / JCM 8422 / Vc1).